The sequence spans 132 residues: Histone H2A.1 (132 aa).

S2 carries the post-translational modification N-acetylserine. N6-acetyllysine occurs at positions 5 and 8. K14 and K22 each carry N6-succinyllysine. The residue at position 106 (Q106) is an N5-methylglutamine. N6-malonyllysine; alternate is present on K120. Residue K127 forms a Glycyl lysine isopeptide (Lys-Gly) (interchain with G-Cter in SUMO) linkage. S129 bears the Phosphoserine mark. The [ST]-Q motif motif lies at 129 to 130 (SQ).

The protein belongs to the histone H2A family. In terms of assembly, the nucleosome is a histone octamer containing two molecules each of H2A, H2B, H3 and H4 assembled in one H3-H4 heterotetramer and two H2A-H2B heterodimers. The octamer wraps approximately 147 bp of DNA. Phosphorylated to form H2AS128ph (gamma-H2A) in response to DNA double-strand breaks (DSBs) generated by exogenous genotoxic agents and by stalled replication forks. Phosphorylation is dependent on the DNA damage checkpoint kinases MEC1/ATR and TEL1/ATM, spreads on either side of a detected DSB site and may mark the surrounding chromatin for recruitment of proteins required for DNA damage signaling and repair. Gamma-H2A interacts with ARP4, a shared component of the NuA4 histone acetyltransferase complex and the INO80 and SWR1 chromatin remodeling complexes, and serves to recruit first NuA4, mediating histone H4 acetylation, and subsequently the INO80/SWR1 complexes, facilitating DNA resection, to DSB sites. Gamma-H2A is required for sequestering cohesin around the break site, which is important for efficient post-replicative double-strand break repair by homologous recombination, holding the damaged chromatid close to its undamaged sister template. Gamma-H2A is removed from the DNA prior to the strand invasion-primer extension step of the repair process and subsequently dephosphorylated by PPH3, a component of the histone H2A phosphatase complex (HTP-C). Dephosphorylation is necessary for efficient recovery from the DNA damage checkpoint. Post-translationally, N-acetylated by NAT4. In terms of processing, acetylated by ESA1, a component of the NuA4 histone acetyltransferase (HAT) complex, to form H2AK4ac and H2AK7ac. Glutamine methylation at Gln-106 (H2AQ105me) by NOP1 is specifically dedicated to polymerase I. It is present at 35S ribosomal DNA locus and impairs binding of the FACT complex. Post-translationally, sumoylated to from H2AK126su. May lead to transcriptional repression.

Its subcellular location is the nucleus. The protein resides in the chromosome. Its function is as follows. Core component of nucleosome which plays a central role in DNA double strand break (DSB) repair. Nucleosomes wrap and compact DNA into chromatin, limiting DNA accessibility to the cellular machineries which require DNA as a template. Histones thereby play a central role in transcription regulation, DNA repair, DNA replication and chromosomal stability. DNA accessibility is regulated via a complex set of post-translational modifications of histones, also called histone code, and nucleosome remodeling. The sequence is that of Histone H2A.1 (HTA1) from Saccharomyces cerevisiae (strain ATCC 204508 / S288c) (Baker's yeast).